The primary structure comprises 205 residues: Large ribosomal subunit protein uL4 (205 aa).

It belongs to the universal ribosomal protein uL4 family. Part of the 50S ribosomal subunit.

In terms of biological role, one of the primary rRNA binding proteins, this protein initially binds near the 5'-end of the 23S rRNA. It is important during the early stages of 50S assembly. It makes multiple contacts with different domains of the 23S rRNA in the assembled 50S subunit and ribosome. Functionally, forms part of the polypeptide exit tunnel. This Ruegeria sp. (strain TM1040) (Silicibacter sp.) protein is Large ribosomal subunit protein uL4.